Reading from the N-terminus, the 874-residue chain is Translation initiation factor IF-2 (874 aa).

The interval 1 to 262 (MEDKNKTIKE…EKSTSDRDFS (262 aa)) is disordered. The segment covering 54–63 (SKPPVMPLPL) has biased composition (pro residues). The segment covering 83-104 (AKREESPGKQDAGRPPRDKDTR) has biased composition (basic and acidic residues). Over residues 141–222 (SGGGYQGNRG…NRGPRSGGTG (82 aa)) the composition is skewed to gly residues. A compositionally biased stretch (polar residues) spans 235-244 (LSQSRGSSVT). The span at 250–262 (HDKEKSTSDRDFS) shows a compositional bias: basic and acidic residues. One can recognise a tr-type G domain in the interval 369-538 (NRPPVVTIMG…LLQAEVMDLK (170 aa)). Positions 378-385 (GHVDHGKT) are G1. GTP is bound at residue 378 to 385 (GHVDHGKT). Positions 403–407 (GITQH) are G2. The tract at residues 424–427 (DTPG) is G3. GTP-binding positions include 424-428 (DTPGH) and 478-481 (NKID). A G4 region spans residues 478 to 481 (NKID). Residues 514-516 (SAR) form a G5 region.

It belongs to the TRAFAC class translation factor GTPase superfamily. Classic translation factor GTPase family. IF-2 subfamily.

Its subcellular location is the cytoplasm. Its function is as follows. One of the essential components for the initiation of protein synthesis. Protects formylmethionyl-tRNA from spontaneous hydrolysis and promotes its binding to the 30S ribosomal subunits. Also involved in the hydrolysis of GTP during the formation of the 70S ribosomal complex. In Leptospira interrogans serogroup Icterohaemorrhagiae serovar copenhageni (strain Fiocruz L1-130), this protein is Translation initiation factor IF-2.